The following is a 198-amino-acid chain: MRIKQSEFIISAVKPHQYPIDNRNEVAFVGRSNVGKSSLINSLTNRKKLAKVSGTPGKTRLINFFLINNDFYLVDLPGYGYAKVSKSEKDTWGKTIETYLSHREELKRIVCLVDSRHKPTGDDIMMYEWAKHFGYDVVIVATKSDKLKNAEFKKSEKLIRDTLKLTKDDKFYFYSSLNKKGTEELIDKLFLEFATDID.

The EngB-type G domain maps to 22–195 (NRNEVAFVGR…IDKLFLEFAT (174 aa)). Residues 30–37 (GRSNVGKS), 57–61 (GKTRL), 75–78 (DLPG), 142–145 (TKSD), and 174–176 (YSS) each bind GTP. Residues Ser37 and Thr59 each coordinate Mg(2+).

The protein belongs to the TRAFAC class TrmE-Era-EngA-EngB-Septin-like GTPase superfamily. EngB GTPase family. The cofactor is Mg(2+).

Its function is as follows. Necessary for normal cell division and for the maintenance of normal septation. This chain is Probable GTP-binding protein EngB, found in Clostridium botulinum (strain Alaska E43 / Type E3).